Reading from the N-terminus, the 472-residue chain is Citrate synthase, mitochondrial (472 aa).

Residues H308, H354, and D409 contribute to the active site.

The protein belongs to the citrate synthase family. In terms of assembly, homodimer.

Its subcellular location is the mitochondrion matrix. It carries out the reaction oxaloacetate + acetyl-CoA + H2O = citrate + CoA + H(+). It participates in carbohydrate metabolism; tricarboxylic acid cycle; isocitrate from oxaloacetate: step 1/2. This Daucus carota (Wild carrot) protein is Citrate synthase, mitochondrial (CS).